Reading from the N-terminus, the 349-residue chain is DENN domain-containing protein 10 (349 aa).

The uDENN domain maps to 1-135 (MATPELMLSL…TKGICQSDEN (135 aa)). The cDENN domain maps to 160–294 (QFGMETIILY…ADRSDAQVIK (135 aa)). The 54-residue stretch at 296–349 (ISVKTKEILSNLMSLADHADNSKLTLECLKQGHYPPATENFLFHLAAAEQLLKI) folds into the dDENN domain.

The protein belongs to the DENND10 family.

It is found in the late endosome. Its function is as follows. Guanine nucleotide exchange factor (GEF) which may be involved in the regulation of late endocytic pathway homeostasis, including endosomal positioning, maturation and secretion. This is DENN domain-containing protein 10 (dennd10) from Danio rerio (Zebrafish).